We begin with the raw amino-acid sequence, 164 residues long: Endoribonuclease YbeY (164 aa).

Residues H114, H118, and H124 each contribute to the Zn(2+) site.

Belongs to the endoribonuclease YbeY family. Requires Zn(2+) as cofactor.

The protein resides in the cytoplasm. Its function is as follows. Single strand-specific metallo-endoribonuclease involved in late-stage 70S ribosome quality control and in maturation of the 3' terminus of the 16S rRNA. The chain is Endoribonuclease YbeY from Mycoplasmoides gallisepticum (strain R(low / passage 15 / clone 2)) (Mycoplasma gallisepticum).